A 197-amino-acid polypeptide reads, in one-letter code: ADP-ribosylation factor-like protein 16 (197 aa).

Residues 30 to 37, 82 to 86, and 139 to 142 each bind GTP; these read GATGVGKT, ELGGC, and NKID.

The protein belongs to the small GTPase superfamily. Arf family. As to quaternary structure, interacts with RIGI; this interaction is GTP-dependent and induced upon viral infection; this interaction suppresses the RNA sensing activity of RIGI.

The protein resides in the cytoplasm. In terms of biological role, may suppress the RNA sensing activity of RIGI in a GTP-dependent. The protein is ADP-ribosylation factor-like protein 16 of Homo sapiens (Human).